The primary structure comprises 137 residues: Fluoride-specific ion channel FluC 2 (137 aa).

4 consecutive transmembrane segments (helical) span residues 3 to 23 (MGGS…SVLG), 44 to 64 (WGTM…GALA), 76 to 96 (PWLF…SFSL), and 111 to 131 (LGNV…GFLL). Gly86 and Thr89 together coordinate Na(+).

The protein belongs to the fluoride channel Fluc/FEX (TC 1.A.43) family.

It localises to the cell inner membrane. It catalyses the reaction fluoride(in) = fluoride(out). Its activity is regulated as follows. Na(+) is not transported, but it plays an essential structural role and its presence is essential for fluoride channel function. Its function is as follows. Fluoride-specific ion channel. Important for reducing fluoride concentration in the cell, thus reducing its toxicity. The sequence is that of Fluoride-specific ion channel FluC 2 from Bradyrhizobium diazoefficiens (strain JCM 10833 / BCRC 13528 / IAM 13628 / NBRC 14792 / USDA 110).